Here is a 141-residue protein sequence, read N- to C-terminus: Hemoglobin subunit alpha-1 (141 aa).

The Globin domain occupies 1–141 (VLSGSDKNNV…VGNVLTAKYR (141 aa)). Histidine 58 contacts O2. Histidine 87 provides a ligand contact to heme b.

The protein belongs to the globin family. As to quaternary structure, heterotetramer of two alpha chains and two beta chains. In terms of tissue distribution, red blood cells.

Its function is as follows. Involved in oxygen transport from the lung to the various peripheral tissues. The polypeptide is Hemoglobin subunit alpha-1 (Stercorarius maccormicki (South polar skua)).